A 127-amino-acid polypeptide reads, in one-letter code: Aspartate 1-decarboxylase (127 aa).

The Schiff-base intermediate with substrate; via pyruvic acid role is filled by Ser25. Ser25 carries the pyruvic acid (Ser) modification. A substrate-binding site is contributed by Thr57. Tyr58 serves as the catalytic Proton donor. 73-75 contacts substrate; the sequence is GAA.

This sequence belongs to the PanD family. Heterooctamer of four alpha and four beta subunits. It depends on pyruvate as a cofactor. Post-translationally, is synthesized initially as an inactive proenzyme, which is activated by self-cleavage at a specific serine bond to produce a beta-subunit with a hydroxyl group at its C-terminus and an alpha-subunit with a pyruvoyl group at its N-terminus.

The protein localises to the cytoplasm. The catalysed reaction is L-aspartate + H(+) = beta-alanine + CO2. The protein operates within cofactor biosynthesis; (R)-pantothenate biosynthesis; beta-alanine from L-aspartate: step 1/1. In terms of biological role, catalyzes the pyruvoyl-dependent decarboxylation of aspartate to produce beta-alanine. The polypeptide is Aspartate 1-decarboxylase (Neisseria meningitidis serogroup A / serotype 4A (strain DSM 15465 / Z2491)).